A 267-amino-acid chain; its full sequence is MEMO1 family protein MM_1761 (267 aa).

It belongs to the MEMO1 family.

This Methanosarcina mazei (strain ATCC BAA-159 / DSM 3647 / Goe1 / Go1 / JCM 11833 / OCM 88) (Methanosarcina frisia) protein is MEMO1 family protein MM_1761.